The chain runs to 527 residues: Triostin synthetase I (527 aa).

Position 187-188 (Gly187–Gly188) interacts with ATP. Residue His230–Gln231 participates in substrate binding. ATP-binding positions include Ser300 to Pro302, Asp406, Arg421, and Lys512. Lys512 serves as a coordination point for substrate.

It belongs to the ATP-dependent AMP-binding enzyme family. In terms of assembly, monomer.

Involved in triostin biosynthesis. Activates quinoxaline-2-carboxylic acid (QA) via catalysis of the ATP-pyrophosphate exchange reaction dependent on QA, and the formation of the corresponding adenylate. Also activates structural analogs of QA such as quinoline-2-carboxylic acid and thieno[3,2-b]pyridine-5-carboxylic acid, but not quinoline-3-carboxylic acid, quinoline-4-carboxylic acid, pyridine-2-carboxylic acid or 2-pyrazinecarboxylic acid. The polypeptide is Triostin synthetase I (trsA) (Streptomyces triostinicus).